We begin with the raw amino-acid sequence, 364 residues long: Flavonoid 3'-O-methyltransferase 3 (364 aa).

D232 contacts S-adenosyl-L-methionine. The active-site Proton acceptor is the H270.

It belongs to the class I-like SAM-binding methyltransferase superfamily. Cation-independent O-methyltransferase family. Homodimer.

It carries out the reaction quercetin + S-adenosyl-L-methionine = isorhamnetin + S-adenosyl-L-homocysteine + H(+). The enzyme catalyses luteolin + S-adenosyl-L-methionine = chrysoeriol + S-adenosyl-L-homocysteine + H(+). The catalysed reaction is a 3'-hydroxyflavone + S-adenosyl-L-methionine = a 3'-methoxyflavone + S-adenosyl-L-homocysteine + H(+). It catalyses the reaction rhamnetin + S-adenosyl-L-methionine = rhamnacene + S-adenosyl-L-homocysteine + H(+). It carries out the reaction 3',4',7,8-tetrahydroxyflavone + S-adenosyl-L-methionine = 4',7,8-trihydroxy-3'-methoxyflavone-7-olate + S-adenosyl-L-homocysteine + H(+). The enzyme catalyses taxifolin + S-adenosyl-L-methionine = taxifolin 3'-methyl ether + S-adenosyl-L-homocysteine + H(+). It participates in flavonoid metabolism. In terms of biological role, flavonoid 3'-O-methyltransferase involved in the biosynthesis of polymethoxylated flavonoids natural products such as pebrellin, aroma compounds which contribute to the flavor of peppermint, and exhibit pharmacological activities such as anti-allergic, anti-oxidant, antibacterial, anti-proliferative, and anti-inflammatory effects. Catalyzes S-adenosylmethionine-dependent regioselective 3'-O-methylation of flavonoids; active on various hydroxylated flavonoid substrates, including quercetin, rhamnetin, luteolin (LUT), 7,8,3'4'-tetrahydroxy-flavone and taxifolin, and, with a lower efficiency, eupatorin and hesperetin. This Mentha piperita (Peppermint) protein is Flavonoid 3'-O-methyltransferase 3.